The chain runs to 196 residues: Nodulation protein A (196 aa).

It belongs to the NodA family.

The protein resides in the cytoplasm. Functionally, N-acyltransferase required for nodulation. Acts in the production of a small, heat-stable compound (Nod) that stimulates mitosis in various plant protoplasts. In Mesorhizobium plurifarium, this protein is Nodulation protein A.